Here is a 304-residue protein sequence, read N- to C-terminus: HTH-type transcriptional activator CmpR (304 aa).

The 61-residue stretch at 1 to 61 (MKNATLHQFE…EQIGRKIYLT (61 aa)) folds into the HTH lysR-type domain. Positions 21-40 (FTKAAEELFLTQPTVSQQMK) form a DNA-binding region, H-T-H motif.

This sequence belongs to the LysR transcriptional regulatory family.

The protein localises to the cytoplasm. Its function is as follows. Activates transcription of the cmpABCD operon under carbon dioxide-limited conditions. Specifically binds to the cmpR-cmpA intergenic region. In Synechocystis sp. (strain ATCC 27184 / PCC 6803 / Kazusa), this protein is HTH-type transcriptional activator CmpR (cmpR).